Here is a 161-residue protein sequence, read N- to C-terminus: Endoribonuclease YbeY (161 aa).

Positions 127, 131, and 137 each coordinate Zn(2+).

The protein belongs to the endoribonuclease YbeY family. Zn(2+) is required as a cofactor.

It localises to the cytoplasm. Its function is as follows. Single strand-specific metallo-endoribonuclease involved in late-stage 70S ribosome quality control and in maturation of the 3' terminus of the 16S rRNA. The chain is Endoribonuclease YbeY from Listeria monocytogenes serotype 4b (strain CLIP80459).